A 324-amino-acid chain; its full sequence is Glucokinase (324 aa).

Residue 6 to 11 (IDIGGT) coordinates ATP.

It belongs to the bacterial glucokinase family.

It is found in the cytoplasm. It carries out the reaction D-glucose + ATP = D-glucose 6-phosphate + ADP + H(+). The protein is Glucokinase of Zymomonas mobilis subsp. mobilis (strain ATCC 31821 / ZM4 / CP4).